Reading from the N-terminus, the 304-residue chain is tRNA dimethylallyltransferase (304 aa).

Position 9 to 16 (9 to 16 (APTAAGKS)) interacts with ATP. Residue 11-16 (TAAGKS) participates in substrate binding.

This sequence belongs to the IPP transferase family. Monomer. It depends on Mg(2+) as a cofactor.

It carries out the reaction adenosine(37) in tRNA + dimethylallyl diphosphate = N(6)-dimethylallyladenosine(37) in tRNA + diphosphate. In terms of biological role, catalyzes the transfer of a dimethylallyl group onto the adenine at position 37 in tRNAs that read codons beginning with uridine, leading to the formation of N6-(dimethylallyl)adenosine (i(6)A). The sequence is that of tRNA dimethylallyltransferase from Deinococcus geothermalis (strain DSM 11300 / CIP 105573 / AG-3a).